The following is a 126-amino-acid chain: Protein Wnt-1 (126 aa).

A lipid anchor (O-palmitoleoyl serine; by PORCN) is attached at Ser-1. Cys-92 and Cys-107 are oxidised to a cystine. N-linked (GlcNAc...) asparagine glycosylation is found at Asn-93 and Asn-123.

The protein belongs to the Wnt family. In terms of processing, palmitoleoylation is required for efficient binding to frizzled receptors. Palmitoleoylation is necessary for proper trafficking to cell surface. Depalmitoleoylated by NOTUM, leading to inhibit Wnt signaling pathway.

Its subcellular location is the secreted. The protein localises to the extracellular space. It is found in the extracellular matrix. Ligand for members of the frizzled family of seven transmembrane receptors. Acts in the canonical Wnt signaling pathway by promoting beta-catenin-dependent transcriptional activation. Plays an essential role in the development of the embryonic brain and central nervous system (CNS). Has a role in osteoblast function, bone development and bone homeostasis. The protein is Protein Wnt-1 (WNT-1) of Plestiodon skiltonianus (Western skink).